Reading from the N-terminus, the 429-residue chain is Glutamate-1-semialdehyde 2,1-aminomutase 1 (429 aa).

An N6-(pyridoxal phosphate)lysine modification is found at K268.

It belongs to the class-III pyridoxal-phosphate-dependent aminotransferase family. HemL subfamily. Homodimer. Pyridoxal 5'-phosphate is required as a cofactor.

Its subcellular location is the cytoplasm. The catalysed reaction is (S)-4-amino-5-oxopentanoate = 5-aminolevulinate. It participates in porphyrin-containing compound metabolism; protoporphyrin-IX biosynthesis; 5-aminolevulinate from L-glutamyl-tRNA(Glu): step 2/2. The protein is Glutamate-1-semialdehyde 2,1-aminomutase 1 of Lysinibacillus sphaericus (strain C3-41).